The sequence spans 117 residues: Large ribosomal subunit protein bL20 (117 aa).

The protein belongs to the bacterial ribosomal protein bL20 family.

Functionally, binds directly to 23S ribosomal RNA and is necessary for the in vitro assembly process of the 50S ribosomal subunit. It is not involved in the protein synthesizing functions of that subunit. The sequence is that of Large ribosomal subunit protein bL20 from Campylobacter jejuni subsp. jejuni serotype O:2 (strain ATCC 700819 / NCTC 11168).